Consider the following 119-residue polypeptide: Large ribosomal subunit protein uL22 (119 aa).

This sequence belongs to the universal ribosomal protein uL22 family. As to quaternary structure, part of the 50S ribosomal subunit.

In terms of biological role, this protein binds specifically to 23S rRNA; its binding is stimulated by other ribosomal proteins, e.g. L4, L17, and L20. It is important during the early stages of 50S assembly. It makes multiple contacts with different domains of the 23S rRNA in the assembled 50S subunit and ribosome. Its function is as follows. The globular domain of the protein is located near the polypeptide exit tunnel on the outside of the subunit, while an extended beta-hairpin is found that lines the wall of the exit tunnel in the center of the 70S ribosome. The polypeptide is Large ribosomal subunit protein uL22 (Bifidobacterium animalis subsp. lactis (strain AD011)).